Consider the following 398-residue polypeptide: 8-amino-7-oxononanoate synthase (398 aa).

Arg-26 is a binding site for substrate. 113–114 (GF) contacts pyridoxal 5'-phosphate. His-138 serves as a coordination point for substrate. Ser-181, His-209, and Thr-238 together coordinate pyridoxal 5'-phosphate. Lys-241 bears the N6-(pyridoxal phosphate)lysine mark. Thr-355 serves as a coordination point for substrate.

Belongs to the class-II pyridoxal-phosphate-dependent aminotransferase family. BioF subfamily. Homodimer. Pyridoxal 5'-phosphate serves as cofactor.

The enzyme catalyses 6-carboxyhexanoyl-[ACP] + L-alanine + H(+) = (8S)-8-amino-7-oxononanoate + holo-[ACP] + CO2. It participates in cofactor biosynthesis; biotin biosynthesis. Catalyzes the decarboxylative condensation of pimeloyl-[acyl-carrier protein] and L-alanine to produce 8-amino-7-oxononanoate (AON), [acyl-carrier protein], and carbon dioxide. The protein is 8-amino-7-oxononanoate synthase of Aeromonas salmonicida (strain A449).